The following is a 326-amino-acid chain: Metal-binding protein YtgA (326 aa).

An N-terminal signal peptide occupies residues 1-21 (MSFFHTRKYKLILRGLLCLAG). The Fe(2+) site is built by His-75, His-141, His-207, and Asp-299.

This sequence belongs to the bacterial solute-binding protein 9 family. Monomer.

The protein localises to the periplasm. Part of the ATP-binding cassette (ABC) transport system YtgABCD involved in metal import. Binds Fe(2+), Mn(2+) and Ni(2+), with a preference for Fe(2+) and delivers them to the membrane permease for translocation into the cytoplasm. In Chlamydia trachomatis serovar D (strain ATCC VR-885 / DSM 19411 / UW-3/Cx), this protein is Metal-binding protein YtgA.